The chain runs to 812 residues: Valine--tRNA ligase (812 aa).

The 'HIGH' region motif lies at 46–56 (PTVSGQLHIGH). Positions 536–540 (KMSKS) match the 'KMSKS' region motif. K539 lines the ATP pocket.

The protein belongs to the class-I aminoacyl-tRNA synthetase family. ValS type 2 subfamily. Monomer.

Its subcellular location is the cytoplasm. The enzyme catalyses tRNA(Val) + L-valine + ATP = L-valyl-tRNA(Val) + AMP + diphosphate. Its function is as follows. Catalyzes the attachment of valine to tRNA(Val). As ValRS can inadvertently accommodate and process structurally similar amino acids such as threonine, to avoid such errors, it has a 'posttransfer' editing activity that hydrolyzes mischarged Thr-tRNA(Val) in a tRNA-dependent manner. This Rickettsia akari (strain Hartford) protein is Valine--tRNA ligase.